Reading from the N-terminus, the 134-residue chain is MMDKAIFNGLGRRKTSVARVYIVSGNGKLTINDKIFASAEEYFKDRVRARHAFEPLVVTNNDGKLDVFVRVEGGGLSGQAGAVRLALARALIKMDTSFKPVLKSHGMLSRDPRMVERKKYGLRKARRAPQYSKR.

It belongs to the universal ribosomal protein uS9 family.

This is Small ribosomal subunit protein uS9 from Pseudothermotoga lettingae (strain ATCC BAA-301 / DSM 14385 / NBRC 107922 / TMO) (Thermotoga lettingae).